Consider the following 288-residue polypeptide: Pantothenate synthetase (288 aa).

Position 30 to 37 (Met-30 to His-37) interacts with ATP. His-37 (proton donor) is an active-site residue. Gln-61 serves as a coordination point for (R)-pantoate. Beta-alanine is bound at residue Gln-61. Gly-149–Asp-152 lines the ATP pocket. Gln-155 serves as a coordination point for (R)-pantoate. ATP contacts are provided by residues Val-178 and Leu-186–Arg-189.

Belongs to the pantothenate synthetase family. Homodimer.

It localises to the cytoplasm. The catalysed reaction is (R)-pantoate + beta-alanine + ATP = (R)-pantothenate + AMP + diphosphate + H(+). The protein operates within cofactor biosynthesis; (R)-pantothenate biosynthesis; (R)-pantothenate from (R)-pantoate and beta-alanine: step 1/1. In terms of biological role, catalyzes the condensation of pantoate with beta-alanine in an ATP-dependent reaction via a pantoyl-adenylate intermediate. This is Pantothenate synthetase from Tolumonas auensis (strain DSM 9187 / NBRC 110442 / TA 4).